The sequence spans 177 residues: dCTP deaminase, dUMP-forming (177 aa).

DCTP contacts are provided by residues 98–103 (RSSVGR), N110, 115–118 (DPGF), 123–125 (TLE), Q144, 157–160 (YQGK), and Q164. The active-site Proton donor/acceptor is the E125.

Belongs to the dCTP deaminase family. In terms of assembly, homotrimer. The cofactor is Mg(2+).

The enzyme catalyses dCTP + 2 H2O = dUMP + NH4(+) + diphosphate. It functions in the pathway pyrimidine metabolism; dUMP biosynthesis; dUMP from dCTP: step 1/1. With respect to regulation, inhibited by dTTP. Bifunctional enzyme that catalyzes both the deamination of dCTP to dUTP and the hydrolysis of dUTP to dUMP without releasing the toxic dUTP intermediate. In Halalkalibacterium halodurans (strain ATCC BAA-125 / DSM 18197 / FERM 7344 / JCM 9153 / C-125) (Bacillus halodurans), this protein is dCTP deaminase, dUMP-forming.